The primary structure comprises 69 residues: Putative membrane protein insertion efficiency factor (69 aa).

This sequence belongs to the UPF0161 family.

The protein localises to the cell membrane. Could be involved in insertion of integral membrane proteins into the membrane. The polypeptide is Putative membrane protein insertion efficiency factor (Thermomicrobium roseum (strain ATCC 27502 / DSM 5159 / P-2)).